The sequence spans 77 residues: Acyl carrier protein (77 aa).

One can recognise a Carrier domain in the interval 2–77 (SDVAERVKKI…DAIDFITANS (76 aa)). The residue at position 37 (serine 37) is an O-(pantetheine 4'-phosphoryl)serine.

It belongs to the acyl carrier protein (ACP) family. Post-translationally, 4'-phosphopantetheine is transferred from CoA to a specific serine of apo-ACP by AcpS. This modification is essential for activity because fatty acids are bound in thioester linkage to the sulfhydryl of the prosthetic group.

It localises to the cytoplasm. The protein operates within lipid metabolism; fatty acid biosynthesis. In terms of biological role, carrier of the growing fatty acid chain in fatty acid biosynthesis. This chain is Acyl carrier protein, found in Paramagnetospirillum magneticum (strain ATCC 700264 / AMB-1) (Magnetospirillum magneticum).